The chain runs to 214 residues: Adenylate kinase (214 aa).

10-15 (GVGKGT) provides a ligand contact to ATP. Residues 30 to 59 (STGDILRAAVKELTPMGAKAKGYMDSGALV) are NMP. AMP-binding positions include Thr-31, Arg-36, 57 to 59 (ALV), 85 to 88 (GFPR), and Gln-92. An LID region spans residues 126–163 (GRRACANCGAGYHVDFAPSKVAGVCDACSGQLVQREDD). Arg-127 is a binding site for ATP. Zn(2+) contacts are provided by Cys-130, Cys-133, Cys-150, and Cys-153. Residues Arg-160 and Arg-171 each coordinate AMP. Gly-199 contacts ATP.

Belongs to the adenylate kinase family. As to quaternary structure, monomer.

It is found in the cytoplasm. It catalyses the reaction AMP + ATP = 2 ADP. The protein operates within purine metabolism; AMP biosynthesis via salvage pathway; AMP from ADP: step 1/1. Its function is as follows. Catalyzes the reversible transfer of the terminal phosphate group between ATP and AMP. Plays an important role in cellular energy homeostasis and in adenine nucleotide metabolism. In Citrifermentans bemidjiense (strain ATCC BAA-1014 / DSM 16622 / JCM 12645 / Bem) (Geobacter bemidjiensis), this protein is Adenylate kinase.